A 250-amino-acid polypeptide reads, in one-letter code: Bis(5'-nucleosyl)-tetraphosphatase PrpE [asymmetrical] (250 aa).

The protein belongs to the PrpE family. Ni(2+) is required as a cofactor.

It catalyses the reaction P(1),P(4)-bis(5'-guanosyl) tetraphosphate + H2O = GMP + GTP + 2 H(+). In terms of biological role, asymmetrically hydrolyzes Ap4p to yield AMP and ATP. This is Bis(5'-nucleosyl)-tetraphosphatase PrpE [asymmetrical] from Oceanobacillus iheyensis (strain DSM 14371 / CIP 107618 / JCM 11309 / KCTC 3954 / HTE831).